The primary structure comprises 235 residues: Regulator of G-protein signaling 18 (235 aa).

The residue at position 49 (Ser49) is a Phosphoserine. Positions Ser86–Met202 constitute an RGS domain. Ser216 and Ser218 each carry phosphoserine.

As to expression, expressed in peripheral leukocytes, bone marrow, platelet, spleen and fetal liver.

It localises to the cytoplasm. Its function is as follows. Inhibits signal transduction by increasing the GTPase activity of G protein alpha subunits thereby driving them into their inactive GDP-bound form. Binds to G(i) alpha-1, G(i) alpha-2, G(i) alpha-3 and G(q) alpha. The protein is Regulator of G-protein signaling 18 (RGS18) of Homo sapiens (Human).